Here is a 509-residue protein sequence, read N- to C-terminus: MASKVIVLDFGGQYSQLIARRIRELKVYCEMLPYNTPLEKIVQENPGGIVFSGGPSSVYGEGAPTVDPEIYRLNIPILGICYGMQLMAHQLGGIVRPAEGREYGKTPLFILNRDRLFAGLNETEICWMSHGDFVAKAPEGFLVTAKTEYTPIAAMENRERNLYAVQFHPEVVHTPKGKEILKNFLYEICGLTPDWTMESFAQKAIREIKEQVGEEKVVCALSGGVDSSVAAVLVHKAIGDNLTCIFVDHGLLRKGEAEEVVRTFKEQFQMNLVFVDAKEQFLAKLKGVRDPEQKRKIIGHEFIRVFEEEAAKLGDIRFLVQGTLYPDVVESGTATAATIKSHHNVGGLPEDMKFQLIEPLKWLFKDEVRELGLELGLPESIVWRHPFPGPGLAVRVLGEITEEKLAILREADYIFIDELKKSGWYRKTWQAFAVLPNLQSVGVMGDERTYAYTIALRAVTSEDGMTADWVRLPYELLEKISARIVGEVKGVNRVVYDITSKPPATIEWE.

Residues 4–194 (KVIVLDFGGQ…LYEICGLTPD (191 aa)) form the Glutamine amidotransferase type-1 domain. Cysteine 81 (nucleophile) is an active-site residue. Residues histidine 168 and glutamate 170 contribute to the active site. Residues 195-384 (WTMESFAQKA…LGLPESIVWR (190 aa)) form the GMPS ATP-PPase domain. 222–228 (SGGVDSS) serves as a coordination point for ATP.

As to quaternary structure, homodimer.

It catalyses the reaction XMP + L-glutamine + ATP + H2O = GMP + L-glutamate + AMP + diphosphate + 2 H(+). It functions in the pathway purine metabolism; GMP biosynthesis; GMP from XMP (L-Gln route): step 1/1. In terms of biological role, catalyzes the synthesis of GMP from XMP. In Carboxydothermus hydrogenoformans (strain ATCC BAA-161 / DSM 6008 / Z-2901), this protein is GMP synthase [glutamine-hydrolyzing].